Here is a 1609-residue protein sequence, read N- to C-terminus: Probable outer membrane protein pmp21 (1609 aa).

A signal peptide spans Met-1–Glu-30. Over residues Phe-132–Val-145 the composition is skewed to polar residues. 2 disordered regions span residues Phe-132–Glu-183 and Thr-640–Pro-677. Basic and acidic residues-rich tracts occupy residues Ile-149–Ser-175 and Asn-651–Glu-672. The Autotransporter domain maps to Glu-1328–Phe-1609.

Belongs to the PMP outer membrane protein family.

The protein localises to the secreted. The protein resides in the cell wall. It localises to the cell outer membrane. This is Probable outer membrane protein pmp21 (pmp21) from Chlamydia pneumoniae (Chlamydophila pneumoniae).